Consider the following 150-residue polypeptide: D-aminoacyl-tRNA deacylase (150 aa).

A Gly-cisPro motif, important for rejection of L-amino acids motif is present at residues 138–139; that stretch reads GP.

The protein belongs to the DTD family. Homodimer.

It localises to the cytoplasm. It catalyses the reaction glycyl-tRNA(Ala) + H2O = tRNA(Ala) + glycine + H(+). It carries out the reaction a D-aminoacyl-tRNA + H2O = a tRNA + a D-alpha-amino acid + H(+). Functionally, an aminoacyl-tRNA editing enzyme that deacylates mischarged D-aminoacyl-tRNAs. Also deacylates mischarged glycyl-tRNA(Ala), protecting cells against glycine mischarging by AlaRS. Acts via tRNA-based rather than protein-based catalysis; rejects L-amino acids rather than detecting D-amino acids in the active site. By recycling D-aminoacyl-tRNA to D-amino acids and free tRNA molecules, this enzyme counteracts the toxicity associated with the formation of D-aminoacyl-tRNA entities in vivo and helps enforce protein L-homochirality. This chain is D-aminoacyl-tRNA deacylase, found in Parabacteroides distasonis (strain ATCC 8503 / DSM 20701 / CIP 104284 / JCM 5825 / NCTC 11152).